A 430-amino-acid polypeptide reads, in one-letter code: 4-hydroxy-3-methylbut-2-en-1-yl diphosphate synthase (flavodoxin) (430 aa).

[4Fe-4S] cluster contacts are provided by Cys310, Cys313, Cys356, and Glu363.

The protein belongs to the IspG family. Requires [4Fe-4S] cluster as cofactor.

The enzyme catalyses (2E)-4-hydroxy-3-methylbut-2-enyl diphosphate + oxidized [flavodoxin] + H2O + 2 H(+) = 2-C-methyl-D-erythritol 2,4-cyclic diphosphate + reduced [flavodoxin]. The protein operates within isoprenoid biosynthesis; isopentenyl diphosphate biosynthesis via DXP pathway; isopentenyl diphosphate from 1-deoxy-D-xylulose 5-phosphate: step 5/6. Functionally, converts 2C-methyl-D-erythritol 2,4-cyclodiphosphate (ME-2,4cPP) into 1-hydroxy-2-methyl-2-(E)-butenyl 4-diphosphate. This chain is 4-hydroxy-3-methylbut-2-en-1-yl diphosphate synthase (flavodoxin), found in Nitrobacter winogradskyi (strain ATCC 25391 / DSM 10237 / CIP 104748 / NCIMB 11846 / Nb-255).